Here is a 376-residue protein sequence, read N- to C-terminus: Flagellar P-ring protein 2 (376 aa).

Residues Met1–Ala19 form the signal peptide.

This sequence belongs to the FlgI family. As to quaternary structure, the basal body constitutes a major portion of the flagellar organelle and consists of four rings (L,P,S, and M) mounted on a central rod.

The protein localises to the periplasm. It is found in the bacterial flagellum basal body. In terms of biological role, assembles around the rod to form the L-ring and probably protects the motor/basal body from shearing forces during rotation. This is Flagellar P-ring protein 2 from Bradyrhizobium diazoefficiens (strain JCM 10833 / BCRC 13528 / IAM 13628 / NBRC 14792 / USDA 110).